The chain runs to 525 residues: GMP synthase [glutamine-hydrolyzing] (525 aa).

The 199-residue stretch at 9–207 folds into the Glutamine amidotransferase type-1 domain; the sequence is RILILDFGSQ…VRDICQCEAL (199 aa). Catalysis depends on Cys-86, which acts as the Nucleophile. Active-site residues include His-181 and Glu-183. Residues 208–400 enclose the GMPS ATP-PPase domain; that stretch reads WTPAKIIDDA…LGLPYDMLYR (193 aa). 235–241 contributes to the ATP binding site; sequence SGGVDSS.

As to quaternary structure, homodimer.

The enzyme catalyses XMP + L-glutamine + ATP + H2O = GMP + L-glutamate + AMP + diphosphate + 2 H(+). It functions in the pathway purine metabolism; GMP biosynthesis; GMP from XMP (L-Gln route): step 1/1. Its function is as follows. Catalyzes the synthesis of GMP from XMP. In Enterobacter sp. (strain 638), this protein is GMP synthase [glutamine-hydrolyzing].